A 737-amino-acid chain; its full sequence is Catalase-peroxidase (737 aa).

The tract at residues Met1 to Gly33 is disordered. The tryptophyl-tyrosyl-methioninium (Trp-Tyr) (with M-261) cross-link spans Trp107 to Tyr235. The Proton acceptor role is filled by His108. The tryptophyl-tyrosyl-methioninium (Tyr-Met) (with W-107) cross-link spans Tyr235–Met261. His276 lines the heme pocket.

It belongs to the peroxidase family. Peroxidase/catalase subfamily. As to quaternary structure, homodimer or homotetramer. Heme b is required as a cofactor. Post-translationally, formation of the three residue Trp-Tyr-Met cross-link is important for the catalase, but not the peroxidase activity of the enzyme.

It carries out the reaction H2O2 + AH2 = A + 2 H2O. It catalyses the reaction 2 H2O2 = O2 + 2 H2O. In terms of biological role, bifunctional enzyme with both catalase and broad-spectrum peroxidase activity. May play a role in polycyclic aromatic hydrocarbon (PAH) metabolism. In Mycolicibacterium vanbaalenii (Mycobacterium vanbaalenii), this protein is Catalase-peroxidase.